The primary structure comprises 1135 residues: Retinoblastoma-like protein 2 (1135 aa).

Residues 1 to 43 (MASGGNQSSPPPPAAAASSEEEEEDGDTADRAQPAGSPSHQIQ) form a disordered region. Ser-410 bears the Phosphoserine mark. Thr-414 is modified (phosphothreonine). Positions 414-613 (TPVSTATHSL…DRIRDNENRV (200 aa)) are domain A. Positions 414-1021 (TPVSTATHSL…QTFAMKYSQA (608 aa)) are pocket; binds E1A. Residue Ser-417 is glycosylated (O-linked (GlcNAc) serine). The segment at 614 to 824 (PTCEEVTPPH…QGQPLTSSSI (211 aa)) is spacer. At Ser-636 the chain carries Phosphoserine. Thr-639 bears the Phosphothreonine mark. Disordered stretches follow at residues 649 to 698 (DAGG…PPQP), 806 to 825 (ISPG…SSIR), and 932 to 995 (RRNS…EEEE). Residues 656-674 (SVTSPTTLYDRYSSPTVST) show a composition bias toward polar residues. Phosphoserine occurs at positions 659, 669, and 684. A compositionally biased stretch (low complexity) spans 806–818 (ISPGGQQQNQGQP). A domain B region spans residues 825 to 1021 (RPRKTSSLSL…QTFAMKYSQA (197 aa)). Composition is skewed to polar residues over residues 935–950 (SGSC…PTEL) and 958–969 (DSSPVMRSNSTL). Residues Ser-942, Ser-946, Ser-960, Ser-965, and Ser-967 each carry the phosphoserine modification. Thr-968 bears the Phosphothreonine mark. Residues 971–981 (VPQPSSAPPTP) show a composition bias toward pro residues. A phosphoserine mark is found at Ser-975 and Ser-976. A Phosphothreonine modification is found at Thr-980. Phosphoserine is present on residues Ser-1031, Ser-1064, Ser-1076, and Ser-1108.

The protein belongs to the retinoblastoma protein (RB) family. In terms of assembly, interacts with AATF, KMT5B and KMT5C. Component of the DREAM complex (also named LINC complex) at least composed of E2F4, E2F5, LIN9, LIN37, LIN52, LIN54, MYBL1, MYBL2, RBL1, RBL2, RBBP4, TFDP1 and TFDP2. The complex exists in quiescent cells where it represses cell cycle-dependent genes. It dissociates in S phase when LIN9, LIN37, LIN52 and LIN54 form a subcomplex that binds to MYBL2. Interacts with USP4. Part of the peroxisome proliferator activated receptor alpha (PPAR-alpha) interacting complex (PRIC). Interacts with RINT1. Interacts with PML. Interacts with RBBP9. Interacts with CD53. In terms of processing, during G0 and early G1 phase of the cell cycle, phosphorylated on Ser-636 and on 5 sites within the domain B. Phosphorylation on Ser-669 in G1 leads to its ubiquitin-dependent proteolysis.

The protein resides in the nucleus. Key regulator of entry into cell division. Directly involved in heterochromatin formation by maintaining overall chromatin structure and, in particular, that of constitutive heterochromatin by stabilizing histone methylation. Recruits and targets histone methyltransferases KMT5B and KMT5C, leading to epigenetic transcriptional repression. Controls histone H4 'Lys-20' trimethylation. Probably acts as a transcription repressor by recruiting chromatin-modifying enzymes to promoters. Potent inhibitor of E2F-mediated trans-activation, associates preferentially with E2F5. Binds to cyclins A and E. Binds to and may be involved in the transforming capacity of the adenovirus E1A protein. May act as a tumor suppressor. This chain is Retinoblastoma-like protein 2 (Rbl2), found in Rattus norvegicus (Rat).